The primary structure comprises 553 residues: Formate--tetrahydrofolate ligase (553 aa).

63-70 is an ATP binding site; it reads TPAGEGKT.

The protein belongs to the formate--tetrahydrofolate ligase family.

The catalysed reaction is (6S)-5,6,7,8-tetrahydrofolate + formate + ATP = (6R)-10-formyltetrahydrofolate + ADP + phosphate. The protein operates within one-carbon metabolism; tetrahydrofolate interconversion. The chain is Formate--tetrahydrofolate ligase from Oenococcus oeni (strain ATCC BAA-331 / PSU-1).